We begin with the raw amino-acid sequence, 410 residues long: Arginine deiminase (410 aa).

Cys400 (amidino-cysteine intermediate) is an active-site residue.

The protein belongs to the arginine deiminase family.

It is found in the cytoplasm. It catalyses the reaction L-arginine + H2O = L-citrulline + NH4(+). It participates in amino-acid degradation; L-arginine degradation via ADI pathway; carbamoyl phosphate from L-arginine: step 1/2. In Bacillus cytotoxicus (strain DSM 22905 / CIP 110041 / 391-98 / NVH 391-98), this protein is Arginine deiminase.